A 1019-amino-acid polypeptide reads, in one-letter code: Antigenic heat-stable 120 kDa protein (1019 aa).

The tract at residues 1–33 is disordered; it reads MSKNDNQDISEFDPLNREFTEAEKQQQMQQEQE. Basic and acidic residues predominate over residues 14–24; that stretch reads PLNREFTEAEK.

The protein localises to the cytoplasm. The protein is Antigenic heat-stable 120 kDa protein (sca4) of Rickettsia typhi (strain ATCC VR-144 / Wilmington).